Reading from the N-terminus, the 348-residue chain is Dihydroorotase (348 aa).

Residues histidine 17 and histidine 19 each coordinate Zn(2+). Substrate is bound by residues 19–21 (HLR) and asparagine 45. Positions 103, 140, and 178 each coordinate Zn(2+). Lysine 103 carries the N6-carboxylysine modification. Histidine 140 contacts substrate. Leucine 223 lines the substrate pocket. Aspartate 251 is a binding site for Zn(2+). Residue aspartate 251 is part of the active site. Histidine 255 and alanine 267 together coordinate substrate.

It belongs to the metallo-dependent hydrolases superfamily. DHOase family. Class II DHOase subfamily. Homodimer. Zn(2+) is required as a cofactor.

The catalysed reaction is (S)-dihydroorotate + H2O = N-carbamoyl-L-aspartate + H(+). The protein operates within pyrimidine metabolism; UMP biosynthesis via de novo pathway; (S)-dihydroorotate from bicarbonate: step 3/3. Its function is as follows. Catalyzes the reversible cyclization of carbamoyl aspartate to dihydroorotate. This chain is Dihydroorotase, found in Escherichia coli O6:H1 (strain CFT073 / ATCC 700928 / UPEC).